Consider the following 349-residue polypeptide: S-adenosylmethionine:tRNA ribosyltransferase-isomerase (349 aa).

This sequence belongs to the QueA family. As to quaternary structure, monomer.

The protein resides in the cytoplasm. It catalyses the reaction 7-aminomethyl-7-carbaguanosine(34) in tRNA + S-adenosyl-L-methionine = epoxyqueuosine(34) in tRNA + adenine + L-methionine + 2 H(+). The protein operates within tRNA modification; tRNA-queuosine biosynthesis. Its function is as follows. Transfers and isomerizes the ribose moiety from AdoMet to the 7-aminomethyl group of 7-deazaguanine (preQ1-tRNA) to give epoxyqueuosine (oQ-tRNA). This Flavobacterium psychrophilum (strain ATCC 49511 / DSM 21280 / CIP 103535 / JIP02/86) protein is S-adenosylmethionine:tRNA ribosyltransferase-isomerase.